The sequence spans 172 residues: 3-hydroxydecanoyl-[acyl-carrier-protein] dehydratase (172 aa).

Residue histidine 71 is part of the active site.

The protein belongs to the thioester dehydratase family. FabA subfamily. In terms of assembly, homodimer.

Its subcellular location is the cytoplasm. The enzyme catalyses a (3R)-hydroxyacyl-[ACP] = a (2E)-enoyl-[ACP] + H2O. It carries out the reaction (3R)-hydroxydecanoyl-[ACP] = (2E)-decenoyl-[ACP] + H2O. It catalyses the reaction (2E)-decenoyl-[ACP] = (3Z)-decenoyl-[ACP]. The protein operates within lipid metabolism; fatty acid biosynthesis. Necessary for the introduction of cis unsaturation into fatty acids. Catalyzes the dehydration of (3R)-3-hydroxydecanoyl-ACP to E-(2)-decenoyl-ACP and then its isomerization to Z-(3)-decenoyl-ACP. Can catalyze the dehydratase reaction for beta-hydroxyacyl-ACPs with saturated chain lengths up to 16:0, being most active on intermediate chain length. This Sodalis glossinidius (strain morsitans) protein is 3-hydroxydecanoyl-[acyl-carrier-protein] dehydratase.